The following is a 573-amino-acid chain: 2-succinyl-5-enolpyruvyl-6-hydroxy-3-cyclohexene-1-carboxylate synthase (573 aa).

It belongs to the TPP enzyme family. MenD subfamily. In terms of assembly, homodimer. It depends on Mg(2+) as a cofactor. Mn(2+) is required as a cofactor. Thiamine diphosphate serves as cofactor.

It catalyses the reaction isochorismate + 2-oxoglutarate + H(+) = 5-enolpyruvoyl-6-hydroxy-2-succinyl-cyclohex-3-ene-1-carboxylate + CO2. It participates in quinol/quinone metabolism; 1,4-dihydroxy-2-naphthoate biosynthesis; 1,4-dihydroxy-2-naphthoate from chorismate: step 2/7. It functions in the pathway quinol/quinone metabolism; menaquinone biosynthesis. In terms of biological role, catalyzes the thiamine diphosphate-dependent decarboxylation of 2-oxoglutarate and the subsequent addition of the resulting succinic semialdehyde-thiamine pyrophosphate anion to isochorismate to yield 2-succinyl-5-enolpyruvyl-6-hydroxy-3-cyclohexene-1-carboxylate (SEPHCHC). This chain is 2-succinyl-5-enolpyruvyl-6-hydroxy-3-cyclohexene-1-carboxylate synthase, found in Shewanella baltica (strain OS195).